The primary structure comprises 187 residues: UPF0301 protein VC_0467 (187 aa).

Belongs to the UPF0301 (AlgH) family.

This is UPF0301 protein VC_0467 from Vibrio cholerae serotype O1 (strain ATCC 39315 / El Tor Inaba N16961).